The following is a 174-amino-acid chain: Probable calcium-binding protein CML20 (174 aa).

A lipid anchor (N-myristoyl glycine) is attached at Gly2. Positions 14–35 (LRRSRSRSPPPAVLDPSQSPLS) are disordered. 4 consecutive EF-hand domains span residues 39–74 (EAEPELIRVFRCFDTDGDGLISAAEMREFYGCSVDE), 75–100 (AEEMVAAADRDGDGFVSIEELRAVME), 102–137 (GGLDALRAAFDEYDEDGNGVITAEELRRALRRLNLD), and 141–174 (LTAEQCAEIVAAVDSDGDGVISFDEFKAMMSKQA). Residues Asp52, Asp54, Asp56, Glu63, Asp83, Asp85, Asp87, Glu94, Asp115, Asp117, Asn119, Glu126, Asp154, Asp156, Asp158, and Glu165 each contribute to the Ca(2+) site.

Its function is as follows. Potential calcium sensor. The polypeptide is Probable calcium-binding protein CML20 (CML20) (Oryza sativa subsp. japonica (Rice)).